Here is a 345-residue protein sequence, read N- to C-terminus: S-adenosylmethionine:tRNA ribosyltransferase-isomerase (345 aa).

The protein belongs to the QueA family. In terms of assembly, monomer.

It is found in the cytoplasm. It carries out the reaction 7-aminomethyl-7-carbaguanosine(34) in tRNA + S-adenosyl-L-methionine = epoxyqueuosine(34) in tRNA + adenine + L-methionine + 2 H(+). It functions in the pathway tRNA modification; tRNA-queuosine biosynthesis. Transfers and isomerizes the ribose moiety from AdoMet to the 7-aminomethyl group of 7-deazaguanine (preQ1-tRNA) to give epoxyqueuosine (oQ-tRNA). This chain is S-adenosylmethionine:tRNA ribosyltransferase-isomerase, found in Thermodesulfovibrio yellowstonii (strain ATCC 51303 / DSM 11347 / YP87).